Reading from the N-terminus, the 404-residue chain is Histidine--tRNA ligase (404 aa).

Belongs to the class-II aminoacyl-tRNA synthetase family.

Its subcellular location is the cytoplasm. The enzyme catalyses tRNA(His) + L-histidine + ATP = L-histidyl-tRNA(His) + AMP + diphosphate + H(+). The protein is Histidine--tRNA ligase of Nanoarchaeum equitans (strain Kin4-M).